Reading from the N-terminus, the 464-residue chain is MTLERLWQVLDPLWADPRVLSALFCGSAMAVVLLKRLGHRRIQQKMEEARRARDLALERMEKAARRFKQENPGTQTAHILSLTMVELAEKLKEGSLSPESVLYSYMGKALEVNREVNCVIDFIHGCEDQLQKVKQQKEKGLLYGIPVSIKDHIDCKGHVSSAGLVKFLGQVKEEDSVIVQVLKSQGAIPFVKTNIPQTMINYDCSNLIFGQTLNPLNHQKTPGGSSGGEGALIAGGGSLLGIGSDVAGSIRLPSSFCGLCGLKPTGFRISKLGVISPITGMNSVIGMLGPIARDVDSLALCMKALLCEEMFRLDPTVPPIPFDEEVYTSSKPLRIGYYEEDGYFQPSPSMKRAVQQTRKLLQEAGHTIVPFAPPKIDYVVDELFTRGIFSDGAAHLVDSFKGDIVDPNLKSQFNTYKLPALVKRILAIILKPIYPRIARDLSALCGVGSAKNLWDQHTAVGLPH.

Catalysis depends on charge relay system residues K150 and S225. Catalysis depends on S249, which acts as the Acyl-ester intermediate.

Belongs to the amidase family. As to expression, kidney.

It is found in the mitochondrion inner membrane. May have a vitamin D3 hydroxylase regulatory function. In Gallus gallus (Chicken), this protein is Vitamin D3 hydroxylase-associated protein.